The sequence spans 922 residues: Disintegrin and metalloproteinase domain-containing protein 10 homolog (922 aa).

The N-terminal stretch at 1 to 26 (MSSPIRNRLQLVVTLIFCLFFENVNG) is a signal peptide. Positions 27-228 (LNNFIDNFET…YMTMGGRSKR (202 aa)) are excised as a propeptide. Asn-74, Asn-185, and Asn-346 each carry an N-linked (GlcNAc...) asparagine glycan. At 229–745 (ANTLRDHDGL…ETLTQWAQDN (517 aa)) the chain is on the extracellular side. Positions 242–480 (RTCSLYMQAD…CSVKNISAVL (239 aa)) constitute a Peptidase M12B domain. His-426 contributes to the Zn(2+) binding site. Residue Glu-427 is part of the active site. Zn(2+) is bound by residues His-430 and His-436. The cysteines at positions 442 and 471 are disulfide-linked. Residue Asn-475 is glycosylated (N-linked (GlcNAc...) asparagine). The region spanning 511 to 615 (SAFCGNQIYE…QCPVSPPKHD (105 aa)) is the Disintegrin domain. 5 cysteine pairs are disulfide-bonded: Cys-542/Cys-577, Cys-564/Cys-572, Cys-588/Cys-607, Cys-594/Cys-626, and Cys-619/Cys-631. Asn-632 is a glycosylation site (N-linked (GlcNAc...) asparagine). 4 disulfides stabilise this stretch: Cys-636-Cys-659, Cys-644-Cys-665, Cys-655-Cys-707, and Cys-700-Cys-713. N-linked (GlcNAc...) asparagine glycosylation occurs at Asn-677. Residues 746–766 (WWVVGVGGLVFLVIMALFVKC) traverse the membrane as a helical segment. Over 767 to 922 (CAVHTPSTNP…SGNGGKKKGK (156 aa)) the chain is Cytoplasmic. Disordered stretches follow at residues 797 to 837 (QHRQ…PSAP) and 864 to 922 (PGSS…KKGK). Over residues 805–834 (AAGSVPPGPGAQPRSGAASAPSRTTPSARP) the composition is skewed to low complexity.

As to quaternary structure, may interact with tetraspanin tsp-12; the interaction promotes sup-17 cell membrane localization. Zn(2+) serves as cofactor. In terms of tissue distribution, expressed in the germline.

The protein localises to the cell membrane. The protein resides in the basolateral cell membrane. Its subcellular location is the cytoplasmic vesicle membrane. It carries out the reaction Endopeptidase of broad specificity.. Metalloprotease. Acts together with protease adm-4 and in a cell autonomous manner to facilitate lin-12/Notch signaling during developmental cell fate decision, including anchor cell/ventral uterine precursor cell decision and vulva precursor cell specification. By modulating glp-1/Notch signaling, plays a role in germline development. Probably by modulating BMP-like Sma/Mab signaling via the shedding of unc-40 ectodomain, involved in the regulation of body size and mesoderm development. Probably by shedding ephrin efn-4, regulates axon guidance of SDQL neuron during development. The sequence is that of Disintegrin and metalloproteinase domain-containing protein 10 homolog from Caenorhabditis elegans.